The primary structure comprises 90 residues: Small ribosomal subunit protein uS15 (90 aa).

Belongs to the universal ribosomal protein uS15 family. Part of the 30S ribosomal subunit. Forms a bridge to the 50S subunit in the 70S ribosome, contacting the 23S rRNA.

Its function is as follows. One of the primary rRNA binding proteins, it binds directly to 16S rRNA where it helps nucleate assembly of the platform of the 30S subunit by binding and bridging several RNA helices of the 16S rRNA. In terms of biological role, forms an intersubunit bridge (bridge B4) with the 23S rRNA of the 50S subunit in the ribosome. In Wolbachia pipientis subsp. Culex pipiens (strain wPip), this protein is Small ribosomal subunit protein uS15.